Here is a 556-residue protein sequence, read N- to C-terminus: Arginine--tRNA ligase (556 aa).

Positions 132–142 (ANPTGDLHLGH) match the 'HIGH' region motif.

Belongs to the class-I aminoacyl-tRNA synthetase family. Monomer.

Its subcellular location is the cytoplasm. It carries out the reaction tRNA(Arg) + L-arginine + ATP = L-arginyl-tRNA(Arg) + AMP + diphosphate. This chain is Arginine--tRNA ligase, found in Shouchella clausii (strain KSM-K16) (Alkalihalobacillus clausii).